Here is a 79-residue protein sequence, read N- to C-terminus: Small ribosomal subunit protein bS18 (79 aa).

The protein belongs to the bacterial ribosomal protein bS18 family. As to quaternary structure, part of the 30S ribosomal subunit. Forms a tight heterodimer with protein bS6.

Functionally, binds as a heterodimer with protein bS6 to the central domain of the 16S rRNA, where it helps stabilize the platform of the 30S subunit. In Listeria innocua serovar 6a (strain ATCC BAA-680 / CLIP 11262), this protein is Small ribosomal subunit protein bS18.